Consider the following 109-residue polypeptide: Large ribosomal subunit protein uL22 (109 aa).

The protein belongs to the universal ribosomal protein uL22 family. Part of the 50S ribosomal subunit.

This protein binds specifically to 23S rRNA; its binding is stimulated by other ribosomal proteins, e.g. L4, L17, and L20. It is important during the early stages of 50S assembly. It makes multiple contacts with different domains of the 23S rRNA in the assembled 50S subunit and ribosome. In terms of biological role, the globular domain of the protein is located near the polypeptide exit tunnel on the outside of the subunit, while an extended beta-hairpin is found that lines the wall of the exit tunnel in the center of the 70S ribosome. This chain is Large ribosomal subunit protein uL22, found in Aromatoleum aromaticum (strain DSM 19018 / LMG 30748 / EbN1) (Azoarcus sp. (strain EbN1)).